A 240-amino-acid chain; its full sequence is Mitochondrial transcription rescue factor 1 (240 aa).

The N-terminal 84 residues, 1 to 84 (MAMASVKLLA…ECIFPFSVRL (84 aa)), are a transit peptide targeting the mitochondrion. A disordered region spans residues 95 to 127 (KKSLQKVDEEDSDEESHHDEMSEQEEELEDDPT). 2 positions are modified to phosphoserine: Ser-106 and Ser-116. The span at 116–126 (SEQEEELEDDP) shows a compositional bias: acidic residues. Positions 142–217 (FRYDVVLKTG…LKKVFEEKTE (76 aa)) constitute an S4 RNA-binding domain.

Monomer. Interacts with POLRMT. Interacts (via S4 domain) with MTRFR (via C-terminus). Associates with mitoribosomal S39 large subunit, peptidyl tRNA and nascent chain.

Its subcellular location is the mitochondrion matrix. In terms of biological role, mitochondrial RNA-binding protein involved in mitochondrial transcription regulation. Functions as a protective factor to maintain proper mitochondrial RNA level during stress. Acts at the transcription level and its protective function depends on its RNA binding ability. Part of a mitoribosome-associated quality control pathway that prevents aberrant translation by responding to interruptions during elongation. As heterodimer with MTRF, ejects the unfinished nascent chain and peptidyl transfer RNA (tRNA), respectively, from stalled ribosomes. Recruitment of mitoribosome biogenesis factors to these quality control intermediates suggests additional roles for MTRES1 and MTRF during mitoribosome rescue. The chain is Mitochondrial transcription rescue factor 1 from Homo sapiens (Human).